The following is a 470-amino-acid chain: Pyruvate kinase I (470 aa).

Residue R32 participates in substrate binding. N34, S36, D66, and T67 together coordinate K(+). An ATP-binding site is contributed by N34 to H37. Position 73 (R73) interacts with ATP. The residue at position 76 (K76) is an N6-acetyllysine. K156 is a binding site for ATP. Residue E222 coordinates Mg(2+). Positions 245, 246, and 278 each coordinate substrate. D246 lines the Mg(2+) pocket. N6-acetyllysine is present on K319.

This sequence belongs to the pyruvate kinase family. As to quaternary structure, homotetramer. Requires Mg(2+) as cofactor. K(+) serves as cofactor.

The enzyme catalyses pyruvate + ATP = phosphoenolpyruvate + ADP + H(+). It participates in carbohydrate degradation; glycolysis; pyruvate from D-glyceraldehyde 3-phosphate: step 5/5. The sequence is that of Pyruvate kinase I (pykF) from Escherichia coli O157:H7.